A 568-amino-acid polypeptide reads, in one-letter code: Urease subunit alpha (568 aa).

The Urease domain maps to 130 to 568 (GGIDTHIHFI…LPMAQRYFLF (439 aa)). Ni(2+)-binding residues include H135, H137, and K218. K218 is modified (N6-carboxylysine). Residue H220 coordinates substrate. Residues H247 and H273 each coordinate Ni(2+). H321 (proton donor) is an active-site residue. D361 provides a ligand contact to Ni(2+).

Belongs to the metallo-dependent hydrolases superfamily. Urease alpha subunit family. Heterotrimer of UreA (gamma), UreB (beta) and UreC (alpha) subunits. Three heterotrimers associate to form the active enzyme. Ni cation serves as cofactor. Carboxylation allows a single lysine to coordinate two nickel ions.

It localises to the cytoplasm. The enzyme catalyses urea + 2 H2O + H(+) = hydrogencarbonate + 2 NH4(+). It functions in the pathway nitrogen metabolism; urea degradation; CO(2) and NH(3) from urea (urease route): step 1/1. This chain is Urease subunit alpha, found in Burkholderia orbicola (strain MC0-3).